The sequence spans 255 residues: 5'-nucleotidase SurE (255 aa).

4 residues coordinate a divalent metal cation: aspartate 16, aspartate 17, serine 47, and asparagine 100.

This sequence belongs to the SurE nucleotidase family. The cofactor is a divalent metal cation.

It localises to the cytoplasm. The enzyme catalyses a ribonucleoside 5'-phosphate + H2O = a ribonucleoside + phosphate. Nucleotidase that shows phosphatase activity on nucleoside 5'-monophosphates. The chain is 5'-nucleotidase SurE from Vibrio vulnificus (strain CMCP6).